Consider the following 178-residue polypeptide: RNA pyrophosphohydrolase (178 aa).

The region spanning 18 to 171 (PYRPCVGLMV…KRKVYEQVVA (154 aa)) is the Nudix hydrolase domain. The Nudix box signature appears at 59-80 (GGIDKGEDPAQAALRELYEETG).

Belongs to the Nudix hydrolase family. RppH subfamily. The cofactor is a divalent metal cation.

In terms of biological role, accelerates the degradation of transcripts by removing pyrophosphate from the 5'-end of triphosphorylated RNA, leading to a more labile monophosphorylated state that can stimulate subsequent ribonuclease cleavage. In Brucella canis (strain ATCC 23365 / NCTC 10854 / RM-666), this protein is RNA pyrophosphohydrolase.